Reading from the N-terminus, the 332-residue chain is T-cell surface glycoprotein CD1c1 (332 aa).

Residues 1 to 17 form the signal peptide; that stretch reads MLFLHFLFLDVVLGGSI. Topologically, residues 18 to 300 are extracellular; sequence TENVVQENIS…IILYWGHGLS (283 aa). N-linked (GlcNAc...) asparagine glycans are attached at residues Asn25, Asn38, Asn75, and Asn146. 2 disulfide bridges follow: Cys120–Cys184 and Cys224–Cys279. Residues 205-292 enclose the Ig-like domain; the sequence is PEVWLSSSPN…HSSLRDQDII (88 aa). Residues 301 to 321 form a helical membrane-spanning segment; it reads VILITFAVIVPLVLLIVLMLL. The Cytoplasmic segment spans residues 322-332; that stretch reads YKKRCTYQGIQ.

Heterodimer with B2M (beta-2-microglobulin).

The protein resides in the cell membrane. The protein localises to the endosome membrane. In terms of biological role, antigen-presenting protein that binds self and non-self lipid and glycolipid antigens and presents them to T-cell receptors on natural killer T-cells. In Cavia porcellus (Guinea pig), this protein is T-cell surface glycoprotein CD1c1 (CD1C1).